An 804-amino-acid polypeptide reads, in one-letter code: Leucine--tRNA ligase (804 aa).

The 'HIGH' region motif lies at 40 to 51; sequence PYPSGAGLHVGH. A 'KMSKS' region motif is present at residues 574–578; the sequence is KMSKS. K577 is an ATP binding site.

This sequence belongs to the class-I aminoacyl-tRNA synthetase family.

The protein localises to the cytoplasm. The enzyme catalyses tRNA(Leu) + L-leucine + ATP = L-leucyl-tRNA(Leu) + AMP + diphosphate. The protein is Leucine--tRNA ligase of Shouchella clausii (strain KSM-K16) (Alkalihalobacillus clausii).